Reading from the N-terminus, the 218-residue chain is Hypoxanthine-guanine phosphoribosyltransferase (218 aa).

An N-acetylalanine modification is found at A2. K69 serves as a coordination point for GMP. K103 bears the N6-acetyllysine mark. K115 is covalently cross-linked (Glycyl lysine isopeptide (Lys-Gly) (interchain with G-Cter in SUMO1); alternate). K115 is covalently cross-linked (Glycyl lysine isopeptide (Lys-Gly) (interchain with G-Cter in SUMO2); alternate). GMP-binding positions include E134–T142, K166, K186–V188, and D194. D138 serves as the catalytic Proton acceptor. T142 is modified (phosphothreonine). D194 serves as a coordination point for Mg(2+).

It belongs to the purine/pyrimidine phosphoribosyltransferase family. In terms of assembly, homotetramer. Requires Mg(2+) as cofactor.

It localises to the cytoplasm. It carries out the reaction IMP + diphosphate = hypoxanthine + 5-phospho-alpha-D-ribose 1-diphosphate. The catalysed reaction is GMP + diphosphate = guanine + 5-phospho-alpha-D-ribose 1-diphosphate. Its pathway is purine metabolism; IMP biosynthesis via salvage pathway; IMP from hypoxanthine: step 1/1. In terms of biological role, converts guanine to guanosine monophosphate, and hypoxanthine to inosine monophosphate. Transfers the 5-phosphoribosyl group from 5-phosphoribosylpyrophosphate onto the purine. Plays a central role in the generation of purine nucleotides through the purine salvage pathway. This is Hypoxanthine-guanine phosphoribosyltransferase (HPRT1) from Canis lupus familiaris (Dog).